Consider the following 468-residue polypeptide: MRISQFEGKAVALWGWGREGRGAYRALRAQLPTQSLTMFCNAEEVRELESLADAALHVETDASAQALGRFEIVVKSPGISPYRAEALAAAAQGTQFIGGTALWFAEHAQPDGSVPGAICVTGTKGKSTTTALLAHLLRVAGHRTALVGNIGQPLLEVLAPQPPPAYWAIELSSYQTGDVGRSGARPELAVVLNLFPEHLDWHGDEARYVRDKLSLVTEGRPRIVLLNAADPLLASLQLPDSEVLWFNHPEGWHLRGDVVYRGEQAIFDSADVPLPGVHNRRNLCAVLAALEALGLDAEALAPAALSFRPLPNRLQVLGSVDGISYVNDSISTTPYASLAALACFAQRRVALLVGGHDRGLDWHDFARHMAQQAPLEIVTMAANGPRIHALLAPLADAGRFGLHAANDLEHAMQLARDALGGQGGVVLLSPGAPSFGAYSDYVARGRHFAQLAGFDPAAISAIPGLGVH.

Residue 122–128 (GTKGKST) participates in ATP binding.

Belongs to the MurCDEF family. MurD2 subfamily.

Its subcellular location is the cytoplasm. The enzyme catalyses UDP-N-acetyl-alpha-D-muramoyl-L-alanine + L-glutamate + ATP = UDP-N-acetyl-alpha-D-muramoyl-L-alanyl-L-glutamate + ADP + phosphate + H(+). It functions in the pathway cell wall biogenesis; peptidoglycan biosynthesis. Cell wall formation. Catalyzes the addition of L-glutamate to the nucleotide precursor UDP-N-acetylmuramoyl-L-alanine. Has weak activity with D-glutamate. The chain is UDP-N-acetylmuramoyl-L-alanine--L-glutamate ligase from Xanthomonas oryzae pv. oryzae (strain MAFF 311018).